The following is a 156-amino-acid chain: 6,7-dimethyl-8-ribityllumazine synthase (156 aa).

5-amino-6-(D-ribitylamino)uracil contacts are provided by residues F23, 57-59, and 81-83; these read AYE and AII. (2S)-2-hydroxy-3-oxobutyl phosphate is bound at residue 86–87; that stretch reads GT. The active-site Proton donor is H89. 5-amino-6-(D-ribitylamino)uracil is bound at residue F114. R128 lines the (2S)-2-hydroxy-3-oxobutyl phosphate pocket.

It belongs to the DMRL synthase family.

The catalysed reaction is (2S)-2-hydroxy-3-oxobutyl phosphate + 5-amino-6-(D-ribitylamino)uracil = 6,7-dimethyl-8-(1-D-ribityl)lumazine + phosphate + 2 H2O + H(+). Its pathway is cofactor biosynthesis; riboflavin biosynthesis; riboflavin from 2-hydroxy-3-oxobutyl phosphate and 5-amino-6-(D-ribitylamino)uracil: step 1/2. In terms of biological role, catalyzes the formation of 6,7-dimethyl-8-ribityllumazine by condensation of 5-amino-6-(D-ribitylamino)uracil with 3,4-dihydroxy-2-butanone 4-phosphate. This is the penultimate step in the biosynthesis of riboflavin. This is 6,7-dimethyl-8-ribityllumazine synthase from Helicobacter pylori (strain Shi470).